We begin with the raw amino-acid sequence, 180 residues long: MSETKQTVFDRLLQERIVWLGEAIDDKLANEICAKILLLNADDPKEDIFLYINSPGGSITAGMAIYDTMQFVSNDIVTVGIGMAASMGQVLLTSGTQNKRYIMPNARVLLHQPLAGFGGTASDIQTQAKLILDMKYRLSQITASRTGKTVEQIMEDGDRDHWFTAEEALEYGFVDHIRTE.

Catalysis depends on S86, which acts as the Nucleophile. Residue H111 is part of the active site.

It belongs to the peptidase S14 family. As to quaternary structure, fourteen ClpP subunits assemble into 2 heptameric rings which stack back to back to give a disk-like structure with a central cavity, resembling the structure of eukaryotic proteasomes.

The protein resides in the cytoplasm. The enzyme catalyses Hydrolysis of proteins to small peptides in the presence of ATP and magnesium. alpha-casein is the usual test substrate. In the absence of ATP, only oligopeptides shorter than five residues are hydrolyzed (such as succinyl-Leu-Tyr-|-NHMec, and Leu-Tyr-Leu-|-Tyr-Trp, in which cleavage of the -Tyr-|-Leu- and -Tyr-|-Trp bonds also occurs).. Functionally, cleaves peptides in various proteins in a process that requires ATP hydrolysis. Has a chymotrypsin-like activity. Plays a major role in the degradation of misfolded proteins. This chain is ATP-dependent Clp protease proteolytic subunit 2, found in Tropheryma whipplei (strain Twist) (Whipple's bacillus).